Consider the following 116-residue polypeptide: Glycine-rich protein 3 short isoform (116 aa).

Residues 1–24 (MASKTLLLLGLFAFLFIVSEMAAA) form the signal peptide. A disordered region spans residues 27–83 (VKSESEETVKPEQHGGGFGDNGGGRYQGGGGHGGHGGGGYQGGGGRYQGGGGRQGGG). A compositionally biased stretch (basic and acidic residues) spans 29 to 39 (SESEETVKPEQ). Residues 40–83 (HGGGFGDNGGGRYQGGGGHGGHGGGGYQGGGGRYQGGGGRQGGG) are compositionally biased toward gly residues. 5 consecutive repeat copies span residues 54–59 (GGGGHG), 62–67 (GGGGYQ), 68–73 (GGGGRY), 75–80 (GGGGRQ), and 81–86 (GGGGSY). The 5 X 6 AA tandem repeats of G-G-G-G-[HYRS]-[GYQ] stretch occupies residues 54–86 (GGGGHGGHGGGGYQGGGGRYQGGGGRQGGGGSY).

It belongs to the GRP family. As to quaternary structure, interacts with WAK1 (via the extracellular domain). Component of a 500 kDa complex, composed of GRP3 or GRP3-S, WAK1 and KAPP.

The protein localises to the secreted. It is found in the extracellular space. The protein resides in the extracellular matrix. In terms of biological role, regulates the function of the receptor protein kinase WAK1. The sequence is that of Glycine-rich protein 3 short isoform (GRP3S) from Arabidopsis thaliana (Mouse-ear cress).